The sequence spans 264 residues: Thymidylate synthase (264 aa).

R21 is a dUMP binding site. H51 is a binding site for (6R)-5,10-methylene-5,6,7,8-tetrahydrofolate. Residue R126–R127 coordinates dUMP. C146 serves as the catalytic Nucleophile. Residues R166–D169, N177, and H207–Y209 each bind dUMP. D169 lines the (6R)-5,10-methylene-5,6,7,8-tetrahydrofolate pocket. A (6R)-5,10-methylene-5,6,7,8-tetrahydrofolate-binding site is contributed by A263.

It belongs to the thymidylate synthase family. Bacterial-type ThyA subfamily. In terms of assembly, homodimer.

It localises to the cytoplasm. The enzyme catalyses dUMP + (6R)-5,10-methylene-5,6,7,8-tetrahydrofolate = 7,8-dihydrofolate + dTMP. The protein operates within pyrimidine metabolism; dTTP biosynthesis. Functionally, catalyzes the reductive methylation of 2'-deoxyuridine-5'-monophosphate (dUMP) to 2'-deoxythymidine-5'-monophosphate (dTMP) while utilizing 5,10-methylenetetrahydrofolate (mTHF) as the methyl donor and reductant in the reaction, yielding dihydrofolate (DHF) as a by-product. This enzymatic reaction provides an intracellular de novo source of dTMP, an essential precursor for DNA biosynthesis. This chain is Thymidylate synthase, found in Shigella flexneri serotype 5b (strain 8401).